A 142-amino-acid chain; its full sequence is Small ribosomal subunit protein uS19 (142 aa).

S2 carries the post-translational modification N-acetylserine. Residues K24, K35, and K64 each participate in a glycyl lysine isopeptide (Lys-Gly) (interchain with G-Cter in ubiquitin) cross-link.

It belongs to the universal ribosomal protein uS19 family. Component of the small ribosomal subunit (SSU). Mature yeast ribosomes consist of a small (40S) and a large (60S) subunit. The 40S small subunit contains 1 molecule of ribosomal RNA (18S rRNA) and 33 different proteins (encoded by 57 genes). The large 60S subunit contains 3 rRNA molecules (25S, 5.8S and 5S rRNA) and 46 different proteins (encoded by 81 genes).

It is found in the cytoplasm. In terms of biological role, component of the ribosome, a large ribonucleoprotein complex responsible for the synthesis of proteins in the cell. The small ribosomal subunit (SSU) binds messenger RNAs (mRNAs) and translates the encoded message by selecting cognate aminoacyl-transfer RNA (tRNA) molecules. The large subunit (LSU) contains the ribosomal catalytic site termed the peptidyl transferase center (PTC), which catalyzes the formation of peptide bonds, thereby polymerizing the amino acids delivered by tRNAs into a polypeptide chain. The nascent polypeptides leave the ribosome through a tunnel in the LSU and interact with protein factors that function in enzymatic processing, targeting, and the membrane insertion of nascent chains at the exit of the ribosomal tunnel. uS19 is involved in the nuclear export of the small ribosomal subunit precursor. Has a role in the late stage of the assembly of pre-40S particles within the nucleus and controls their export to the cytoplasm. This chain is Small ribosomal subunit protein uS19, found in Saccharomyces cerevisiae (strain ATCC 204508 / S288c) (Baker's yeast).